The sequence spans 269 residues: 4-hydroxy-tetrahydrodipicolinate reductase (269 aa).

NAD(+) is bound by residues 8–13 and glutamate 34; that span reads GAAGRM. Arginine 35 lines the NADP(+) pocket. NAD(+) contacts are provided by residues 98-100 and 122-125; these read GTT and APNY. Catalysis depends on histidine 155, which acts as the Proton donor/acceptor. Histidine 156 provides a ligand contact to (S)-2,3,4,5-tetrahydrodipicolinate. Lysine 159 serves as the catalytic Proton donor. 165-166 contacts (S)-2,3,4,5-tetrahydrodipicolinate; the sequence is GT.

This sequence belongs to the DapB family.

The protein localises to the cytoplasm. It catalyses the reaction (S)-2,3,4,5-tetrahydrodipicolinate + NAD(+) + H2O = (2S,4S)-4-hydroxy-2,3,4,5-tetrahydrodipicolinate + NADH + H(+). The enzyme catalyses (S)-2,3,4,5-tetrahydrodipicolinate + NADP(+) + H2O = (2S,4S)-4-hydroxy-2,3,4,5-tetrahydrodipicolinate + NADPH + H(+). It functions in the pathway amino-acid biosynthesis; L-lysine biosynthesis via DAP pathway; (S)-tetrahydrodipicolinate from L-aspartate: step 4/4. Catalyzes the conversion of 4-hydroxy-tetrahydrodipicolinate (HTPA) to tetrahydrodipicolinate. This Vibrio campbellii (strain ATCC BAA-1116) protein is 4-hydroxy-tetrahydrodipicolinate reductase.